The chain runs to 157 residues: Rieske domain-containing protein (157 aa).

An N-acetylmethionine modification is found at methionine 1. Serine 6 is modified (phosphoserine). 2 Rieske domains span residues 16–127 (TSVC…VDNG) and 17–131 (SVCV…NIYV). [2Fe-2S] cluster contacts are provided by cysteine 57, histidine 59, cysteine 80, and histidine 83.

It depends on [2Fe-2S] cluster as a cofactor.

The chain is Rieske domain-containing protein (Rfesd) from Mus musculus (Mouse).